The chain runs to 693 residues: Sodium-dependent phosphate transport protein 2B (693 aa).

The tract at residues 1 to 46 (MAPWPELENSQPTSEKYTVKADGEQSAKPEKAKETEKDDTGTPITK) is disordered. At 1–89 (MAPWPELENS…KWSERDTKGK (89 aa)) the chain is on the cytoplasmic side. Over residues 17-40 (YTVKADGEQSAKPEKAKETEKDDT) the composition is skewed to basic and acidic residues. A helical membrane pass occupies residues 90–110 (ILCVFQGIGKFILLLVFLYFF). At 111–135 (VCSLDVLSSAFQLVGGKVAGKFFNN) the chain is on the extracellular side. Residues 136–156 (NSIMSNPLAGMVIGVLVTVLV) traverse the membrane as a helical segment. Topologically, residues 157-212 (QSSSTSTSIVVSMVASSLLPVHAAIPIIMGANIGTSITNTIVALMQAGDRKEFRRA) are cytoplasmic. The helical transmembrane segment at 213–233 (FAGATVHDFFNWLSVLVLLPL) threads the bilayer. The Extracellular segment spans residues 234-361 (EAATGYLERL…IFVNFNLSDA (128 aa)). Residues Cys302 and Cys349 are joined by a disulfide bond. 2 N-linked (GlcNAc...) asparagine glycosylation sites follow: Asn307 and Asn320. The chain crosses the membrane as a helical span at residues 362-382 (IVGTILLITSLLILCTCLILI). Topologically, residues 383–408 (VKLLGSVLRGQVAAVIKKTINTDFPY) are cytoplasmic. Residues 409–429 (PFSWVTGYLAILVGAGMTFIV) form a helical membrane-spanning segment. At 430–485 (QSSSVFTSAMTPLIGIGVISIQRAYPLTLGANIGTTTTAILAALASPGSTLKSSLQ) the chain is on the extracellular side. Residues 486–506 (IALCHFFFNISGIILWYPIPF) traverse the membrane as a helical segment. Residues 507-525 (TRLPIRLAKGLGNISSKYR) are Cytoplasmic-facing. The helical transmembrane segment at 526-546 (WFAIVYLIVFFLLIPLAVFGL) threads the bilayer. At 547–550 (SLIG) the chain is on the extracellular side. Residues 551–571 (WPVLVGVASPIVLVILLVVVL) form a helical membrane-spanning segment. Residues 572–693 (KILQSFCPGS…TKIVSSVTAL (122 aa)) lie on the Cytoplasmic side of the membrane.

The protein belongs to the SLC34A transporter family. In terms of processing, glycosylated.

The protein resides in the apical cell membrane. It catalyses the reaction 3 Na(+)(out) + phosphate(out) = 3 Na(+)(in) + phosphate(in). Its function is as follows. Involved in actively transporting phosphate into cells via Na(+) cotransport. In Bos taurus (Bovine), this protein is Sodium-dependent phosphate transport protein 2B (SLC34A2).